The chain runs to 208 residues: Small ribosomal subunit protein uS4 (208 aa).

A disordered region spans residues 32 to 53 (LNRKRGKNSPGQHGASKVKMSD). Residues 99-161 (LRLDNVVYRL…YKSNVIIKKL (63 aa)) form the S4 RNA-binding domain.

The protein belongs to the universal ribosomal protein uS4 family. As to quaternary structure, part of the 30S ribosomal subunit. Contacts protein S5. The interaction surface between S4 and S5 is involved in control of translational fidelity.

Functionally, one of the primary rRNA binding proteins, it binds directly to 16S rRNA where it nucleates assembly of the body of the 30S subunit. With S5 and S12 plays an important role in translational accuracy. This chain is Small ribosomal subunit protein uS4, found in Endomicrobium trichonymphae.